Reading from the N-terminus, the 816-residue chain is Phosphatidylinositol 4-kinase beta (816 aa).

Disordered regions lie at residues 1-30 (MGDM…GSLL), 101-120 (EDEM…RRRR), and 250-318 (RKRE…SFSS). Gly2 is subject to N-acetylglycine. Residues 2-68 (GDMVVEPATL…VKLLHGGVAI (67 aa)) are interaction with ACBD3. Residues 10–30 (TLKPTSEPTPSPSGNNGGSLL) are compositionally biased toward low complexity. Residues 52 to 242 (CQEVLEKVKL…GTKLRKLILS (191 aa)) enclose the PIK helical domain. The residue at position 258 (Ser258) is a Phosphoserine. Thr263 carries the phosphothreonine modification. Residues Ser266, Ser275, Ser277, Ser284, and Ser294 each carry the phosphoserine modification. Composition is skewed to polar residues over residues 278 to 297 (DATA…SNPK) and 306 to 318 (SSST…SFSS). At Ser428 the chain carries Phosphoserine. The residue at position 438 (Thr438) is a Phosphothreonine. A Phosphoserine modification is found at Ser511. Residues Thr517 and Thr519 each carry the phosphothreonine modification. A PI3K/PI4K catalytic domain is found at 535 to 801 (EPWQEKVRRI…MVDGSMRSIT (267 aa)). The tract at residues 541–547 (VRRIREG) is G-loop. Residues 668 to 676 (QVKDRHNGN) form a catalytic loop region. The activation loop stretch occupies residues 687-711 (HIDFGFILSSSPRNLGFETSAFKLT).

It belongs to the PI3/PI4-kinase family. Type III PI4K subfamily. As to quaternary structure, interacts with ARF1 and ARF3 in the Golgi complex, but not with ARF4, ARF5 or ARF6. Interacts with NCS1/FREQ in a calcium-independent manner. Interacts with CALN1/CABP8 and CALN2/CABP7; in a calcium-dependent manner; this interaction competes with NCS1/FREQ binding. Interacts with ACBD3. Interacts with ARMH3, YWHAB, YWHAE, YWHAG, YWHAH, YWHAQ, YWHAZ and SFN. Interacts with GGA2 (via VHS domain); the interaction is important for PI4KB location at the Golgi apparatus membrane. Interacts with ATG9A. The cofactor is Mg(2+). Mn(2+) is required as a cofactor.

The protein localises to the endomembrane system. It is found in the mitochondrion outer membrane. It localises to the rough endoplasmic reticulum membrane. Its subcellular location is the golgi apparatus. The protein resides in the golgi apparatus membrane. It carries out the reaction a 1,2-diacyl-sn-glycero-3-phospho-(1D-myo-inositol) + ATP = a 1,2-diacyl-sn-glycero-3-phospho-(1D-myo-inositol 4-phosphate) + ADP + H(+). Inhibited by wortmannin. Increased kinase activity upon interaction with NCS1/FREQ. Its function is as follows. Phosphorylates phosphatidylinositol (PI) in the first committed step in the production of the second messenger inositol-1,4,5,-trisphosphate (PIP). May regulate Golgi disintegration/reorganization during mitosis, possibly via its phosphorylation. Involved in Golgi-to-plasma membrane trafficking. May play an important role in the inner ear development. In Mus musculus (Mouse), this protein is Phosphatidylinositol 4-kinase beta (Pi4kb).